A 269-amino-acid polypeptide reads, in one-letter code: 2-dehydro-3-deoxyphosphooctonate aldolase (269 aa).

The protein belongs to the KdsA family.

The protein resides in the cytoplasm. It carries out the reaction D-arabinose 5-phosphate + phosphoenolpyruvate + H2O = 3-deoxy-alpha-D-manno-2-octulosonate-8-phosphate + phosphate. It functions in the pathway carbohydrate biosynthesis; 3-deoxy-D-manno-octulosonate biosynthesis; 3-deoxy-D-manno-octulosonate from D-ribulose 5-phosphate: step 2/3. Its pathway is bacterial outer membrane biogenesis; lipopolysaccharide biosynthesis. The protein is 2-dehydro-3-deoxyphosphooctonate aldolase of Chlamydia felis (strain Fe/C-56) (Chlamydophila felis).